Consider the following 468-residue polypeptide: Probable citrate synthase, mitochondrial (468 aa).

Active-site residues include H303, H349, and D404.

The protein belongs to the citrate synthase family. Homodimer.

It localises to the mitochondrion matrix. It catalyses the reaction oxaloacetate + acetyl-CoA + H2O = citrate + CoA + H(+). The protein operates within carbohydrate metabolism; tricarboxylic acid cycle; isocitrate from oxaloacetate: step 1/2. This is Probable citrate synthase, mitochondrial (cts-1) from Caenorhabditis elegans.